Here is a 400-residue protein sequence, read N- to C-terminus: Diphosphomevalonate decarboxylase (400 aa).

(R)-5-diphosphomevalonate contacts are provided by residues Tyr-25–Lys-28, Arg-80, Ser-155–Arg-160, and Thr-211.

This sequence belongs to the diphosphomevalonate decarboxylase family. As to quaternary structure, homodimer.

The protein resides in the cytoplasm. It carries out the reaction (R)-5-diphosphomevalonate + ATP = isopentenyl diphosphate + ADP + phosphate + CO2. It functions in the pathway steroid biosynthesis; cholesterol biosynthesis. Catalyzes the ATP dependent decarboxylation of (R)-5-diphosphomevalonate to form isopentenyl diphosphate (IPP). Functions in the mevalonate (MVA) pathway leading to isopentenyl diphosphate (IPP), a key precursor for the biosynthesis of isoprenoids and sterol synthesis. This is Diphosphomevalonate decarboxylase (mvd) from Danio rerio (Zebrafish).